Consider the following 653-residue polypeptide: MSTTTMNIASAPIEVKRIYWPKSTISYTDSGYLVGWKYSTNDLIVVTTITSYQSFANFLVDYCKNQDQSVDIKSLCILGTFNCSADILPGDKYEIDCWIKVQQSTELSHPRVFDSASTPLKINLHIIYYHPPQPRKMQFLSLEPLSLLLLKDSFINKSNPEYESMQHQQILLKKLKLHFPRRKENSWKRSLRSGLIELLNQSFEVRMLTHENNNKKNSYVFRLFDRVSSSTFYFFNSLFAYFIILLRIINEVILLAINYRPIPLSYNMMDIFVSARQVDLRLQQACFWPVQYMKLWVFRKSKRVAIEDYKEYIRFYNNLWLVANDMIFGITMSSFILENLHLVVKLIENITFEYAIKNVRSMVIWLVDTPAGLKLNNDICKFIMKLSVWVIDVWSNFLLHCLPWTPFLVQVVAISGFGGASLMIALISDFLSVMTIHIHLLYLASSRLYNWQLRVIYSLLQLFRGKKRNVLRNRIDSYEYDLDQLLLGTILFTVLIFFLPTIYVFYAAFALTRVSVMTCLAICETMLAFLNHFPLFVTMLRIKDPYRIPSGLNFEIVSFEPLKQDGFATLYLNCNSKPMSLGSMFEHYRKLARRLISHYLSKTTLISLLVGCPVPAIPAEQLYNIQYAMLPTKRISIRKLRDLLFHQKKFPYD.

A run of 8 helical transmembrane segments spans residues 43-63, 237-257, 327-347, 382-402, 407-427, 485-505, 520-540, and 605-625; these read LIVVTTITSYQSFANFLVDYC, SLFAYFIILLRIINEVILLAI, IFGITMSSFILENLHLVVKLI, FIMKLSVWVIDVWSNFLLHCL, FLVQVVAISGFGGASLMIALI, LLLGTILFTVLIFFLPTIYVF, LAICETMLAFLNHFPLFVTML, and LISLLVGCPVPAIPAEQLYNI.

It localises to the membrane. It participates in glycolipid biosynthesis; glycosylphosphatidylinositol-anchor biosynthesis. Its function is as follows. Necessary for the synthesis of N-acetylglucosaminyl-phosphatidylinositol, the very early intermediate in GPI-anchor biosynthesis. The sequence is that of N-acetylglucosaminyl-phosphatidylinositol biosynthetic protein gpi1 (gpi1) from Schizosaccharomyces pombe (strain 972 / ATCC 24843) (Fission yeast).